The chain runs to 372 residues: Glutamate 5-kinase (372 aa).

Lys14 is an ATP binding site. Residues Ser54, Asp141, and Asn153 each coordinate substrate. Residues 173 to 174 and 215 to 221 contribute to the ATP site; these read TD and TGGMSTK. One can recognise a PUA domain in the interval 280 to 358; it reads QGSLVLDAGA…DEIESVLGYD (79 aa).

Belongs to the glutamate 5-kinase family.

It localises to the cytoplasm. The enzyme catalyses L-glutamate + ATP = L-glutamyl 5-phosphate + ADP. The protein operates within amino-acid biosynthesis; L-proline biosynthesis; L-glutamate 5-semialdehyde from L-glutamate: step 1/2. Functionally, catalyzes the transfer of a phosphate group to glutamate to form L-glutamate 5-phosphate. The polypeptide is Glutamate 5-kinase (Shewanella oneidensis (strain ATCC 700550 / JCM 31522 / CIP 106686 / LMG 19005 / NCIMB 14063 / MR-1)).